The sequence spans 291 residues: Bis(5'-nucleosyl)-tetraphosphatase, symmetrical (291 aa).

Belongs to the Ap4A hydrolase family.

The catalysed reaction is P(1),P(4)-bis(5'-adenosyl) tetraphosphate + H2O = 2 ADP + 2 H(+). In terms of biological role, hydrolyzes diadenosine 5',5'''-P1,P4-tetraphosphate to yield ADP. The sequence is that of Bis(5'-nucleosyl)-tetraphosphatase, symmetrical from Coxiella burnetii (strain CbuG_Q212) (Coxiella burnetii (strain Q212)).